The sequence spans 601 residues: Putative Lon protease homolog (601 aa).

Residues 363–560 (GEIVGQINGL…YQACELLFGR (198 aa)) enclose the Lon proteolytic domain. Active-site residues include serine 455 and lysine 498.

Belongs to the peptidase S16 family.

This chain is Putative Lon protease homolog, found in Haemophilus influenzae (strain ATCC 51907 / DSM 11121 / KW20 / Rd).